A 141-amino-acid polypeptide reads, in one-letter code: Large ribosomal subunit protein bL21 (141 aa).

Residues 111–141 are disordered; the sequence is ATAPSRTEAAPESNPEAAPSAAATGIPADEE. Over residues 118-133 the composition is skewed to low complexity; the sequence is EAAPESNPEAAPSAAA.

Belongs to the bacterial ribosomal protein bL21 family. In terms of assembly, part of the 50S ribosomal subunit. Contacts protein L20.

Functionally, this protein binds to 23S rRNA in the presence of protein L20. This chain is Large ribosomal subunit protein bL21, found in Synechococcus sp. (strain JA-2-3B'a(2-13)) (Cyanobacteria bacterium Yellowstone B-Prime).